The sequence spans 223 residues: MDNIPYFLATVLIFSLGFRIEEGMCQHYYLLRPIPSDSLPIVELKEDPDPVLDPKERDLNETELRAILGSHFEQNFMSINPPEDKHAGQDELNESELMKQRPNGIMPKEIKAMEFDIQHGKKHKPSKKLRRRLQLWLWSYTFCPVVHTWQDLGNRFWPRYLKVGSCYNKRSCSVPEGMVCKPPKSSHLTVLRWRCVQRKGGLKCAWIPVQYPVISECKCSCPN.

Residues 1–23 (MDNIPYFLATVLIFSLGFRIEEG) form the signal peptide. 2 N-linked (GlcNAc...) asparagine glycosylation sites follow: Asn60 and Asn93.

The protein belongs to the noggin family. Homodimer; disulfide-linked.

The protein resides in the secreted. May function as an inhibitor of bone morphogenetic proteins (BMP) signaling during later stages of development including late phases of dorsoventral patterning, to refine the early pattern set up by the interaction of chordino and BMP2/4. Not involved in organizer function or early phases of dorsoventral pattern formation. This is Noggin-3 (nog3) from Danio rerio (Zebrafish).